The sequence spans 316 residues: 4-hydroxy-3-methylbut-2-enyl diphosphate reductase (316 aa).

Cys-12 serves as a coordination point for [4Fe-4S] cluster. Residues His-43 and His-81 each contribute to the (2E)-4-hydroxy-3-methylbut-2-enyl diphosphate site. 2 residues coordinate dimethylallyl diphosphate: His-43 and His-81. Residues His-43 and His-81 each coordinate isopentenyl diphosphate. [4Fe-4S] cluster is bound at residue Cys-103. Position 131 (His-131) interacts with (2E)-4-hydroxy-3-methylbut-2-enyl diphosphate. His-131 lines the dimethylallyl diphosphate pocket. His-131 serves as a coordination point for isopentenyl diphosphate. Glu-133 serves as the catalytic Proton donor. Thr-170 is a binding site for (2E)-4-hydroxy-3-methylbut-2-enyl diphosphate. Cys-198 is a binding site for [4Fe-4S] cluster. (2E)-4-hydroxy-3-methylbut-2-enyl diphosphate is bound by residues Ser-226, Asn-228, and Ser-271. Positions 226, 228, and 271 each coordinate dimethylallyl diphosphate. The isopentenyl diphosphate site is built by Ser-226, Asn-228, and Ser-271.

The protein belongs to the IspH family. Requires [4Fe-4S] cluster as cofactor.

The enzyme catalyses isopentenyl diphosphate + 2 oxidized [2Fe-2S]-[ferredoxin] + H2O = (2E)-4-hydroxy-3-methylbut-2-enyl diphosphate + 2 reduced [2Fe-2S]-[ferredoxin] + 2 H(+). It catalyses the reaction dimethylallyl diphosphate + 2 oxidized [2Fe-2S]-[ferredoxin] + H2O = (2E)-4-hydroxy-3-methylbut-2-enyl diphosphate + 2 reduced [2Fe-2S]-[ferredoxin] + 2 H(+). The protein operates within isoprenoid biosynthesis; dimethylallyl diphosphate biosynthesis; dimethylallyl diphosphate from (2E)-4-hydroxy-3-methylbutenyl diphosphate: step 1/1. It participates in isoprenoid biosynthesis; isopentenyl diphosphate biosynthesis via DXP pathway; isopentenyl diphosphate from 1-deoxy-D-xylulose 5-phosphate: step 6/6. Catalyzes the conversion of 1-hydroxy-2-methyl-2-(E)-butenyl 4-diphosphate (HMBPP) into a mixture of isopentenyl diphosphate (IPP) and dimethylallyl diphosphate (DMAPP). Acts in the terminal step of the DOXP/MEP pathway for isoprenoid precursor biosynthesis. The sequence is that of 4-hydroxy-3-methylbut-2-enyl diphosphate reductase from Geobacillus thermodenitrificans (strain NG80-2).